We begin with the raw amino-acid sequence, 409 residues long: Pentatricopeptide repeat-containing protein At1g31790 (409 aa).

9 PPR repeats span residues 87-121, 122-152, 153-187, 192-226, 229-259, 260-294, 295-330, 331-361, and 363-397; these read NEDIYSCLAKESARENDQRGAHELQVHIMKSSIRP, TITFINRLLLMHVSCGRLDITRQMFDRMPHR, DFHSWAIVFLGCIEMGDYEDAAFLFVSMLKHSQKG, PSWILGCVLKACAMIRDFELGKQVHALCHKLGFID, DSYLSGSLIRFYGEFRCLEDANLVLHQLSNA, NTVAWAAKVTNDYREGEFQEVIRDFIEMGNHGIKK, NVSVFSNVLKACSWVSDGGRSGQQVHANAIKLGFES, DCLIRCRLIEMYGKYGKVKDAEKVFKSSKDE, and SVSCWNAMVASYMQNGIYIEAIKLLYQMKATGIKA.

It belongs to the PPR family. PCMP-A subfamily.

The chain is Pentatricopeptide repeat-containing protein At1g31790 (PCMP-A1) from Arabidopsis thaliana (Mouse-ear cress).